A 309-amino-acid polypeptide reads, in one-letter code: Glutaminase (309 aa).

7 residues coordinate substrate: serine 64, asparagine 114, glutamate 160, asparagine 167, tyrosine 191, tyrosine 243, and valine 261.

The protein belongs to the glutaminase family. Homotetramer.

The catalysed reaction is L-glutamine + H2O = L-glutamate + NH4(+). The sequence is that of Glutaminase from Methylorubrum extorquens (strain CM4 / NCIMB 13688) (Methylobacterium extorquens).